The sequence spans 131 residues: Small ribosomal subunit protein uS8 (131 aa).

This sequence belongs to the universal ribosomal protein uS8 family. As to quaternary structure, part of the 30S ribosomal subunit. Contacts proteins S5 and S12.

In terms of biological role, one of the primary rRNA binding proteins, it binds directly to 16S rRNA central domain where it helps coordinate assembly of the platform of the 30S subunit. The sequence is that of Small ribosomal subunit protein uS8 from Dictyoglomus thermophilum (strain ATCC 35947 / DSM 3960 / H-6-12).